The following is a 166-amino-acid chain: Ureidoglycolate lyase (166 aa).

It belongs to the ureidoglycolate lyase family. As to quaternary structure, homodimer. Ni(2+) serves as cofactor.

It catalyses the reaction (S)-ureidoglycolate = urea + glyoxylate. It participates in nitrogen metabolism; (S)-allantoin degradation. In terms of biological role, catalyzes the catabolism of the allantoin degradation intermediate (S)-ureidoglycolate, generating urea and glyoxylate. Involved in the utilization of allantoin as nitrogen source. This Agrobacterium fabrum (strain C58 / ATCC 33970) (Agrobacterium tumefaciens (strain C58)) protein is Ureidoglycolate lyase.